A 699-amino-acid polypeptide reads, in one-letter code: Kinesin-II 85 kDa subunit (699 aa).

In terms of domain architecture, Kinesin motor spans 10-342; sequence NVRVVVRCRP…LRYANRAKNI (333 aa). ATP is bound at residue 97 to 104; the sequence is GQTGTGKT. Residues 341-619 adopt a coiled-coil conformation; the sequence is NIKNKAKINE…EDIGEWQLKC (279 aa). Disordered stretches follow at residues 369–415, 432–456, and 660–699; these read KQIS…LSPE, EEKK…ESEL, and GMKY…ALLQ. Positions 376–395 are enriched in acidic residues; sequence EGLDDDEESGSEESGDEEAG. The span at 400–411 shows a compositional bias: basic residues; that stretch reads KKKRKGKNPKRK. Positions 620–699 are globular; it reads VAYTGNNMRK…MASSIDALLQ (80 aa). A compositionally biased stretch (polar residues) spans 667–679; sequence QGKSGRPKTSSGR.

The protein belongs to the TRAFAC class myosin-kinesin ATPase superfamily. Kinesin family. Kinesin II subfamily. As to quaternary structure, heterotrimer of a 115 kDa subunit (KAP115) and two kinesin-like subunits of 95 kDa (KRP95) and 85 kDa (KRP85). The N-terminus is blocked.

The protein resides in the cytoplasm. It localises to the cytoskeleton. The polypeptide is Kinesin-II 85 kDa subunit (KRP85) (Strongylocentrotus purpuratus (Purple sea urchin)).